The chain runs to 440 residues: MAAAAAATFLPHTPTPRRRLAVAVHSPTRRRLSLVFSGPPDGALSVAAAEEKADAGEEAAAAVSAPRGGGGGGGKERRRVVRKAWEKLVRWSRSWRRRNRSDVVETTRKVVVLGGGSFGTAMAAQVAAKKADLEVSMLLRDDLVCRSINHSHINCKYLRDHRLPENITATTSASDALAGADFCFHAVPVQFSSSFLEGISTHVDPKLPFISLSKGLELNTLRTMSQIIPQALGNPRQPFIVLSGPSFAIELMNKLPTAMVVASKDKKLAAAVQQLLASPNLRISTSNDVTGVEIAGALKNVLAIAAGIVEGMHLGNNCMAALVAQGCSEIRWLATKMGAKPTTLSGLSGSGDIMLTCFVNLSRNRNVGLRLGSGEKLDEIMNSMNQVAEGVSTAGAVIALAQKYHVKMPVLTAVARIIDNELTPKKAVMELMNLPQVEEV.

A chloroplast-targeting transit peptide spans 1-47; it reads MAAAAAATFLPHTPTPRRRLAVAVHSPTRRRLSLVFSGPPDGALSVA. The tract at residues 57–76 is disordered; sequence EEAAAAVSAPRGGGGGGGKE. Residues 114–119, phenylalanine 191, lysine 214, and alanine 248 each bind NAD(+); that span reads GGGSFG. Lysine 214 contacts substrate. Lysine 299 (proton acceptor) is an active-site residue. Arginine 363 and glutamate 389 together coordinate NAD(+). 363–364 is a binding site for substrate; the sequence is RN.

It belongs to the NAD-dependent glycerol-3-phosphate dehydrogenase family.

It localises to the plastid. The protein resides in the chloroplast. The catalysed reaction is sn-glycerol 3-phosphate + NAD(+) = dihydroxyacetone phosphate + NADH + H(+). It functions in the pathway membrane lipid metabolism; glycerophospholipid metabolism. Its function is as follows. Required to supply glycerol-3-phosphate in the chloroplast for the synthesis of glycerolipids. This Oryza sativa subsp. japonica (Rice) protein is Glycerol-3-phosphate dehydrogenase [NAD(+)], chloroplastic.